A 183-amino-acid polypeptide reads, in one-letter code: ATP synthase subunit b 2 (183 aa).

The chain crosses the membrane as a helical span at residues 27–47; sequence PSFYAFLALLIFFGLLLHMGV.

The protein belongs to the ATPase B chain family. F-type ATPases have 2 components, F(1) - the catalytic core - and F(0) - the membrane proton channel. F(1) has five subunits: alpha(3), beta(3), gamma(1), delta(1), epsilon(1). F(0) has three main subunits: a(1), b(2) and c(10-14). The alpha and beta chains form an alternating ring which encloses part of the gamma chain. F(1) is attached to F(0) by a central stalk formed by the gamma and epsilon chains, while a peripheral stalk is formed by the delta and b chains.

It is found in the cell inner membrane. F(1)F(0) ATP synthase produces ATP from ADP in the presence of a proton or sodium gradient. F-type ATPases consist of two structural domains, F(1) containing the extramembraneous catalytic core and F(0) containing the membrane proton channel, linked together by a central stalk and a peripheral stalk. During catalysis, ATP synthesis in the catalytic domain of F(1) is coupled via a rotary mechanism of the central stalk subunits to proton translocation. Functionally, component of the F(0) channel, it forms part of the peripheral stalk, linking F(1) to F(0). This chain is ATP synthase subunit b 2, found in Maricaulis maris (strain MCS10) (Caulobacter maris).